A 215-amino-acid chain; its full sequence is Adenylate kinase (215 aa).

Residue 10-15 (GAGKGT) coordinates ATP. Residues 30-59 (STGDMLRAAVKAGTELGLKAKSVMDAGNLV) form an NMP region. Residues Thr31, Arg36, 57–59 (NLV), 85–88 (GFPR), and Gln92 contribute to the AMP site. Residues 122–159 (GRRVHEGSGRIYHTIFNPPKVEGVDDVTGESLVQRKDD) are LID. ATP contacts are provided by residues Arg123 and 132–133 (IY). Positions 156 and 167 each coordinate AMP. ATP is bound at residue Gly201.

This sequence belongs to the adenylate kinase family. Monomer.

The protein localises to the cytoplasm. It catalyses the reaction AMP + ATP = 2 ADP. It functions in the pathway purine metabolism; AMP biosynthesis via salvage pathway; AMP from ADP: step 1/1. Functionally, catalyzes the reversible transfer of the terminal phosphate group between ATP and AMP. Plays an important role in cellular energy homeostasis and in adenine nucleotide metabolism. This is Adenylate kinase from Pseudomonas syringae pv. tomato (strain ATCC BAA-871 / DC3000).